The primary structure comprises 433 residues: MSDVLFIEGGRVIDPAGGVDGVRTVVIRDGKVAEVAERVERPRDARVLDARNRWVTPGFVDLHVHLREPGQEYKETVATGARAAVAGGFTAVCAMPNTKPVNDCAAVTELVLARAAAAGLARVYPVGAISKGSGGEELAEYGELKASGCVALSDDGRPVMSSALMRRALEYARAFGLPLTVHEEDLHLVGKGVMHEGAAATRLGLKGIPSQAEDVMVLRDIALVELTGGRLHVAHVSTAGAVRAIREAKRRGLPVTGEVTPHHLALTDDDVAASGYSTDFKMNPPLRSADDVRACREGLADGTLDAIATDHAPHSAVEKDVEFDAAANGIVGLETAFSVCLGLVREGALTERRLVEALTAGPARVFGLPAGTLARGAAADVAVLDAAAEWTLDPARLQSKGRNTPWKGRRLAGRCTHTIVGGRIVHEEGKADR.

Residues H63 and H65 each coordinate Zn(2+). Substrate-binding positions include 65-67 (HLR) and N97. Residues D155, H182, and H235 each coordinate Zn(2+). N283 contributes to the substrate binding site. Residue D310 participates in Zn(2+) binding. D310 is a catalytic residue. H314 contributes to the substrate binding site.

This sequence belongs to the metallo-dependent hydrolases superfamily. DHOase family. Class I DHOase subfamily. The cofactor is Zn(2+).

It catalyses the reaction (S)-dihydroorotate + H2O = N-carbamoyl-L-aspartate + H(+). The protein operates within pyrimidine metabolism; UMP biosynthesis via de novo pathway; (S)-dihydroorotate from bicarbonate: step 3/3. Catalyzes the reversible cyclization of carbamoyl aspartate to dihydroorotate. The sequence is that of Dihydroorotase from Anaeromyxobacter dehalogenans (strain 2CP-C).